Here is a 56-residue protein sequence, read N- to C-terminus: Small ribosomal subunit protein uS14 (56 aa).

Zn(2+) is bound by residues Cys-21, Cys-24, Cys-39, and Cys-42.

Belongs to the universal ribosomal protein uS14 family. Zinc-binding uS14 subfamily. Part of the 30S ribosomal subunit. Zn(2+) is required as a cofactor.

In terms of biological role, binds 16S rRNA, required for the assembly of 30S particles. The polypeptide is Small ribosomal subunit protein uS14 (Thermococcus kodakarensis (strain ATCC BAA-918 / JCM 12380 / KOD1) (Pyrococcus kodakaraensis (strain KOD1))).